A 199-amino-acid chain; its full sequence is Adenylyl-sulfate kinase (199 aa).

34–41 provides a ligand contact to ATP; the sequence is GLSGSGKS. Ser108 functions as the Phosphoserine intermediate in the catalytic mechanism.

It belongs to the APS kinase family.

It carries out the reaction adenosine 5'-phosphosulfate + ATP = 3'-phosphoadenylyl sulfate + ADP + H(+). Its pathway is sulfur metabolism; hydrogen sulfide biosynthesis; sulfite from sulfate: step 2/3. Functionally, catalyzes the synthesis of activated sulfate. The polypeptide is Adenylyl-sulfate kinase (Oceanobacillus iheyensis (strain DSM 14371 / CIP 107618 / JCM 11309 / KCTC 3954 / HTE831)).